The sequence spans 344 residues: Arginine N-succinyltransferase (344 aa).

Succinyl-CoA is bound at residue leucine 125. The active-site Proton donor is histidine 229.

It belongs to the arginine N-succinyltransferase family.

It catalyses the reaction succinyl-CoA + L-arginine = N(2)-succinyl-L-arginine + CoA + H(+). Its pathway is amino-acid degradation; L-arginine degradation via AST pathway; L-glutamate and succinate from L-arginine: step 1/5. In terms of biological role, catalyzes the transfer of succinyl-CoA to arginine to produce N(2)-succinylarginine. This Shigella dysenteriae serotype 1 (strain Sd197) protein is Arginine N-succinyltransferase.